The primary structure comprises 241 residues: Adapter protein MecA (241 aa).

The segment at 77-102 (KNTDEDDVADESQGDASVDSEHPDQV) is disordered. The span at 80-89 (DEDDVADESQ) shows a compositional bias: acidic residues.

The protein belongs to the MecA family. As to quaternary structure, homodimer.

Enables the recognition and targeting of unfolded and aggregated proteins to the ClpC protease or to other proteins involved in proteolysis. The protein is Adapter protein MecA of Levilactobacillus brevis (strain ATCC 367 / BCRC 12310 / CIP 105137 / JCM 1170 / LMG 11437 / NCIMB 947 / NCTC 947) (Lactobacillus brevis).